Here is a 309-residue protein sequence, read N- to C-terminus: MKITILSGGTGTPKLIQGFKEILPNEDISVIVNTGEDTYIGDIYLSPDIDTVLYTFSDLINDETWYGLKGDTFICHEQLKKFGSDEVLKIGDKDRALKMHKASSLKKGVLMSEIVDIERNSLSIKSKIYPMSNEKVESKVLIEENNEKILLKFHDFWIFRKGNAKVLDIFYENSNYAKAADGVLKAIEESDFVLIGPSNPITSIGPILSISEIKNALKEKLVFAVSPIVGENPVSGPAGTLMNAKGYPVNAIGVYEYYKDIVDVLVLDNSDINKKKDINCEVLYANTIMKTIDDKINLARNILDYYKSR.

2 residues coordinate 7,8-didemethyl-8-hydroxy-5-deazariboflavin: Asp50 and Lys89.

This sequence belongs to the CofD family. As to quaternary structure, homodimer. Mg(2+) is required as a cofactor.

The catalysed reaction is (2S)-lactyl-2-diphospho-5'-guanosine + 7,8-didemethyl-8-hydroxy-5-deazariboflavin = oxidized coenzyme F420-0 + GMP + H(+). Its pathway is cofactor biosynthesis; coenzyme F420 biosynthesis. In terms of biological role, catalyzes the transfer of the 2-phospholactate moiety from (2S)-lactyl-2-diphospho-5'-guanosine to 7,8-didemethyl-8-hydroxy-5-deazariboflavin (FO) with the formation of oxidized coenzyme F420-0 and GMP. This is 2-phospho-L-lactate transferase from Methanococcus maripaludis (strain C6 / ATCC BAA-1332).